A 229-amino-acid polypeptide reads, in one-letter code: Ribonuclease 3 (229 aa).

Residues 5–127 (LSRLERKLGH…LIGAIYLDAG (123 aa)) form the RNase III domain. Residue Glu-40 coordinates Mg(2+). The active site involves Asp-44. Residues Asp-113 and Glu-116 each contribute to the Mg(2+) site. The active site involves Glu-116. Residues 154–224 (DPKTRLQEFL…AAAALIALGV (71 aa)) enclose the DRBM domain.

This sequence belongs to the ribonuclease III family. Homodimer. Requires Mg(2+) as cofactor.

The protein resides in the cytoplasm. The enzyme catalyses Endonucleolytic cleavage to 5'-phosphomonoester.. Its function is as follows. Digests double-stranded RNA. Involved in the processing of primary rRNA transcript to yield the immediate precursors to the large and small rRNAs (23S and 16S). Processes some mRNAs, and tRNAs when they are encoded in the rRNA operon. Processes pre-crRNA and tracrRNA of type II CRISPR loci if present in the organism. This chain is Ribonuclease 3, found in Ectopseudomonas mendocina (strain ymp) (Pseudomonas mendocina).